Reading from the N-terminus, the 36-residue chain is Photosystem I reaction center subunit VIII (36 aa).

A helical transmembrane segment spans residues 10–30; sequence FVPLVGLVFSAIIMVLSFLYI.

Belongs to the PsaI family.

The protein localises to the plastid. It is found in the chloroplast thylakoid membrane. Functionally, may help in the organization of the PsaL subunit. The chain is Photosystem I reaction center subunit VIII from Welwitschia mirabilis (Tree tumbo).